The primary structure comprises 505 residues: Tyrosine-protein kinase isoform SRK1 (505 aa).

Composition is skewed to polar residues over residues 1-10 (MGSCCSSQDG) and 18-31 (AGSTVDSHELSQSV). Residues 1–53 (MGSCCSSQDGDGNGKATAGSTVDSHELSQSVKGKIKQPEPKPKPPPQVPPAQD) are disordered. Positions 54-116 (VKYPIYVGKY…PSNYVAEYKS (63 aa)) constitute an SH3 domain. An SH2 domain is found at 122-214 (WFLGKIKRVE…GLCCKLLYPC (93 aa)). Positions 240–493 (IKLLRRLGAG…TLQWQLEEFF (254 aa)) constitute a Protein kinase domain. ATP is bound by residues 246–254 (LGAGQFGEV) and Lys-268. The Proton acceptor role is filled by Asp-359.

Belongs to the protein kinase superfamily. Tyr protein kinase family. SRC subfamily.

It localises to the cytoplasm. It carries out the reaction L-tyrosyl-[protein] + ATP = O-phospho-L-tyrosyl-[protein] + ADP + H(+). In Spongilla lacustris (Freshwater sponge), this protein is Tyrosine-protein kinase isoform SRK1 (SRK1).